Consider the following 169-residue polypeptide: Cell division inhibitor SulA (169 aa).

A ftsZ binding region spans residues 106–112 (ALRTGNY). The tract at residues 162–169 (KIHSNLYH) is lon protease binding.

This sequence belongs to the SulA family. In terms of assembly, interacts with FtsZ. In terms of processing, is rapidly cleaved and degraded by the Lon protease once DNA damage is repaired.

Its function is as follows. Component of the SOS system and an inhibitor of cell division. Accumulation of SulA causes rapid cessation of cell division and the appearance of long, non-septate filaments. In the presence of GTP, binds a polymerization-competent form of FtsZ in a 1:1 ratio, thus inhibiting FtsZ polymerization and therefore preventing it from participating in the assembly of the Z ring. This mechanism prevents the premature segregation of damaged DNA to daughter cells during cell division. This chain is Cell division inhibitor SulA, found in Escherichia coli O45:K1 (strain S88 / ExPEC).